Here is a 334-residue protein sequence, read N- to C-terminus: Glyceraldehyde-3-phosphate dehydrogenase B (334 aa).

Residues 12–13 (RI), Asp34, and Ser121 each bind NAD(+). D-glyceraldehyde 3-phosphate-binding positions include 149 to 151 (SCT), Thr180, 209 to 210 (TG), and Arg232. Cys150 acts as the Nucleophile in catalysis. Asn314 contributes to the NAD(+) binding site.

This sequence belongs to the glyceraldehyde-3-phosphate dehydrogenase family. In terms of assembly, homotetramer.

The catalysed reaction is D-glyceraldehyde 3-phosphate + phosphate + NAD(+) = (2R)-3-phospho-glyceroyl phosphate + NADH + H(+). Its pathway is carbohydrate degradation; glycolysis; pyruvate from D-glyceraldehyde 3-phosphate: step 1/5. Its function is as follows. Glyceraldehyde-3-phosphate dehydrogenase; part of the gene cluster that mediates the biosynthesis of heptelidic acid (HA), a sesquiterpene lactone that acts as an inhibitor of glyceraldehyde-3-phosphatedehydrogenase (GAPDH) and a growth inhibitor of the salt-tolerant lactic acid bacteria in soy sauce brewing. The GAPDPH hepG/gdpB shows much higher resistance to HA than the GAPDH gpdA located outside of the cluster, but it does not seem to act in self-resistance. This Aspergillus oryzae (strain ATCC 42149 / RIB 40) (Yellow koji mold) protein is Glyceraldehyde-3-phosphate dehydrogenase B.